The following is a 178-amino-acid chain: Cytochrome b6-f complex iron-sulfur subunit (178 aa).

Residues 20 to 42 form a helical membrane-spanning segment; it reads LLTFGTATGVALGALYPVANYFM. The region spanning 65–161 is the Rieske domain; sequence KTGWLATHQA…VDIEDDAVLV (97 aa). Residues C107, H109, C125, and H128 each contribute to the [2Fe-2S] cluster site. The cysteines at positions 112 and 127 are disulfide-linked.

This sequence belongs to the Rieske iron-sulfur protein family. In terms of assembly, the 4 large subunits of the cytochrome b6-f complex are cytochrome b6, subunit IV (17 kDa polypeptide, PetD), cytochrome f and the Rieske protein, while the 4 small subunits are PetG, PetL, PetM and PetN. The complex functions as a dimer. The cofactor is [2Fe-2S] cluster.

It is found in the cellular thylakoid membrane. The catalysed reaction is 2 oxidized [plastocyanin] + a plastoquinol + 2 H(+)(in) = 2 reduced [plastocyanin] + a plastoquinone + 4 H(+)(out). In terms of biological role, component of the cytochrome b6-f complex, which mediates electron transfer between photosystem II (PSII) and photosystem I (PSI), cyclic electron flow around PSI, and state transitions. The chain is Cytochrome b6-f complex iron-sulfur subunit from Prochlorococcus marinus (strain MIT 9301).